Reading from the N-terminus, the 136-residue chain is Protein PsiE (136 aa).

The next 4 helical transmembrane spans lie at 15 to 35, 55 to 75, 83 to 103, and 108 to 128; these read ILQN…VVFL, YELV…ALIV, HFPL…LIIV, and PMDV…LWLC.

It belongs to the PsiE family.

It localises to the cell inner membrane. In Salmonella agona (strain SL483), this protein is Protein PsiE.